Here is a 367-residue protein sequence, read N- to C-terminus: Peptide chain release factor 2 (367 aa).

N5-methylglutamine is present on Gln250.

Belongs to the prokaryotic/mitochondrial release factor family. In terms of processing, methylated by PrmC. Methylation increases the termination efficiency of RF2.

It localises to the cytoplasm. Functionally, peptide chain release factor 2 directs the termination of translation in response to the peptide chain termination codons UGA and UAA. The chain is Peptide chain release factor 2 from Kineococcus radiotolerans (strain ATCC BAA-149 / DSM 14245 / SRS30216).